The primary structure comprises 79 residues: uncharacterized protein (79 aa).

This is an uncharacterized protein from Methanocaldococcus jannaschii (strain ATCC 43067 / DSM 2661 / JAL-1 / JCM 10045 / NBRC 100440) (Methanococcus jannaschii).